Consider the following 101-residue polypeptide: Large ribosomal subunit protein uL24 (101 aa).

Belongs to the universal ribosomal protein uL24 family. Part of the 50S ribosomal subunit.

Functionally, one of two assembly initiator proteins, it binds directly to the 5'-end of the 23S rRNA, where it nucleates assembly of the 50S subunit. One of the proteins that surrounds the polypeptide exit tunnel on the outside of the subunit. This chain is Large ribosomal subunit protein uL24, found in Ruegeria sp. (strain TM1040) (Silicibacter sp.).